The sequence spans 174 residues: Small ribosomal subunit protein uS5c (174 aa).

An S5 DRBM domain is found at 17–80; it reads WEERVVQVKR…TDAKKHLVTV (64 aa).

The protein belongs to the universal ribosomal protein uS5 family. As to quaternary structure, part of the 30S ribosomal subunit. Contacts protein S4.

The protein resides in the plastid. It is found in the chloroplast. In terms of biological role, with S4 and S12 plays an important role in translational accuracy. In Porphyra purpurea (Red seaweed), this protein is Small ribosomal subunit protein uS5c (rps5).